The following is a 153-amino-acid chain: Actin-related protein 2/3 complex subunit 5-like protein (153 aa).

Ser64 carries the phosphoserine modification.

The protein belongs to the ARPC5 family. May be a component of the Arp2/3 complex in which it may replace ARPC5.

The protein resides in the cytoplasm. The protein localises to the cytoskeleton. Functionally, may function as component of the Arp2/3 complex which is involved in regulation of actin polymerization and together with an activating nucleation-promoting factor (NPF) mediates the formation of branched actin networks. This is Actin-related protein 2/3 complex subunit 5-like protein (ARPC5L) from Pongo abelii (Sumatran orangutan).